We begin with the raw amino-acid sequence, 499 residues long: Phenylalanine--tRNA ligase alpha subunit (499 aa).

L-phenylalanine is bound by residues Thr-342, 381–383, and Phe-422; that span reads QID. Glu-424 is a binding site for Mg(2+). Phe-447 lines the L-phenylalanine pocket.

It belongs to the class-II aminoacyl-tRNA synthetase family. Phe-tRNA synthetase alpha subunit type 2 subfamily. Tetramer of two alpha and two beta subunits. Requires Mg(2+) as cofactor.

It is found in the cytoplasm. The catalysed reaction is tRNA(Phe) + L-phenylalanine + ATP = L-phenylalanyl-tRNA(Phe) + AMP + diphosphate + H(+). In Pyrococcus horikoshii (strain ATCC 700860 / DSM 12428 / JCM 9974 / NBRC 100139 / OT-3), this protein is Phenylalanine--tRNA ligase alpha subunit.